The following is a 105-amino-acid chain: Flower-specific defensin (105 aa).

Positions 1-25 are cleaved as a signal peptide; the sequence is MARSLCFMAFAILAMMLFVAYEVQA. Cystine bridges form between C28–C72, C39–C59, C45–C66, and C49–C68. The propeptide at 73 to 105 is removed in mature form; the sequence is VFDEKMTKTGAEILAEEAKTLAAALLEEEIMDN.

This sequence belongs to the DEFL family. In terms of tissue distribution, most abundant in the epidermal cell layers of the petals and sepals, within the connective cells of the anthers, and the cortical cells of the style. Not detected in the tapetum, pollen mother cells, the transmitting tissue, the vascular bundles of the anther and style or in leaves. Expressed also in ovaries, but barley detectable in roots.

The protein localises to the secreted. It is found in the vacuole. Its function is as follows. Plant defense peptide with antifungal activity against F.oxysporum and B.cinerea. Retards the growth of the Lepidopteran insect pests H.armigera and H.punctigera. The protein is Flower-specific defensin (D1) of Nicotiana alata (Winged tobacco).